A 240-amino-acid chain; its full sequence is RxLR effector protein PexRD20 (240 aa).

The first 23 residues, 1-23, serve as a signal peptide directing secretion; the sequence is MRCHYFVLLAVAAFLAGANVAVA. The short motif at 43-58 is the RxLR-dEER element; that stretch reads RALRSHTKATDHGEER.

It belongs to the RxLR effector family.

The protein resides in the secreted. The protein localises to the host cytoplasm. It is found in the host nucleus. It localises to the host nucleolus. Its function is as follows. Effector that enhances P.infestans colonization of Nicotiana benthamiana leaves. The protein is RxLR effector protein PexRD20 of Phytophthora infestans (strain T30-4) (Potato late blight agent).